Here is a 396-residue protein sequence, read N- to C-terminus: Large ribosomal subunit protein uL4A (396 aa).

Basic and acidic residues predominate over residues 352–373; sequence KAKEKKPDDGKPKAKKPLDAKT. The interval 352-374 is disordered; it reads KAKEKKPDDGKPKAKKPLDAKTK.

This sequence belongs to the universal ribosomal protein uL4 family. Component of the large ribosomal subunit.

It is found in the cytoplasm. Component of the large ribosomal subunit. The ribosome is a large ribonucleoprotein complex responsible for the synthesis of proteins in the cell. The polypeptide is Large ribosomal subunit protein uL4A (rpl4-a) (Xenopus laevis (African clawed frog)).